The sequence spans 479 residues: ATP synthase subunit beta (479 aa).

158-165 is an ATP binding site; that stretch reads GGAGLGKT.

This sequence belongs to the ATPase alpha/beta chains family. As to quaternary structure, F-type ATPases have 2 components, CF(1) - the catalytic core - and CF(0) - the membrane proton channel. CF(1) has five subunits: alpha(3), beta(3), gamma(1), delta(1), epsilon(1). CF(0) has three main subunits: a(1), b(2) and c(9-12). The alpha and beta chains form an alternating ring which encloses part of the gamma chain. CF(1) is attached to CF(0) by a central stalk formed by the gamma and epsilon chains, while a peripheral stalk is formed by the delta and b chains.

The protein resides in the cell inner membrane. The catalysed reaction is ATP + H2O + 4 H(+)(in) = ADP + phosphate + 5 H(+)(out). Produces ATP from ADP in the presence of a proton gradient across the membrane. The catalytic sites are hosted primarily by the beta subunits. The protein is ATP synthase subunit beta of Rhodopirellula baltica (strain DSM 10527 / NCIMB 13988 / SH1).